A 1827-amino-acid chain; its full sequence is Phenolphthiocerol/phthiocerol polyketide synthase subunit C (1827 aa).

The Ketosynthase family 3 (KS3) domain maps to 35–461; that stretch reads CEPVAVVGIG…GTNAHVVVEQ (427 aa). Active-site for beta-ketoacyl synthase activity residues include Cys207, His342, and His383. Positions 566–876 are acyltransferase; it reads VFVYSGQGSQ…LAAVGVAASE (311 aa). The For malonyltransferase activity role is filled by Ser654. The tract at residues 910 to 1037 is N-terminal hotdog fold; that stretch reads HPLLGAHIEM…AKVEQSPREC (128 aa). A dehydratase region spans residues 910-1076; it reads HPLLGAHIEM…QHHGPAFAAL (167 aa). Positions 910-1198 constitute a PKS/mFAS DH domain; the sequence is HPLLGAHIEM…LRRVERRAVP (289 aa). The active-site Proton acceptor; for dehydratase activity is His942. Positions 1050–1198 are C-terminal hotdog fold; it reads GTTVSPADFY…LRRVERRAVP (149 aa). Asp1111 acts as the Proton donor; for dehydratase activity in catalysis. The beta-ketoacyl reductase stretch occupies residues 1439–1617; that stretch reads ASYVVTGGLG…VINWGPWSEV (179 aa). 1440–1485 contributes to the NADP(+) binding site; sequence SYVVTGGLGGLGLVVARWLVDRGAGRVVLGGRSDPTDEQCNVLAEL. Positions 1706–1785 constitute a Carrier domain; that stretch reads RAVTERMCAR…DLTADLMRQL (80 aa). Ser1745 is modified (O-(pantetheine 4'-phosphoryl)serine).

It depends on NADP(+) as a cofactor. The cofactor is pantetheine 4'-phosphate.

The catalysed reaction is icosanoyl-[(phenol)carboxyphthiodiolenone synthase] + 2 (S)-methylmalonyl-CoA + 3 malonyl-CoA + 5 NADPH + 10 H(+) = C32-carboxyphthiodiolenone-[(phenol)carboxyphthiodiolenone synthase] + 5 CO2 + 5 NADP(+) + 5 CoA + 2 H2O. The enzyme catalyses docosanoyl-[(phenol)carboxyphthiodiolenone synthase] + 2 (S)-methylmalonyl-CoA + 3 malonyl-CoA + 5 NADPH + 10 H(+) = C34-carboxyphthiodiolenone-[(phenol)carboxyphthiodiolenone synthase] + 5 CO2 + 5 NADP(+) + 5 CoA + 2 H2O. It catalyses the reaction 17-(4-hydroxyphenyl)heptadecanoyl-[(phenol)carboxyphthiodiolenone synthase] + 2 (S)-methylmalonyl-CoA + 3 malonyl-CoA + 5 NADPH + 10 H(+) = C35-(phenol)carboxyphthiodiolenone-[(phenol)carboxyphthiodiolenone synthase] + 5 CO2 + 5 NADP(+) + 5 CoA + 2 H2O. It carries out the reaction 19-(4-hydroxyphenyl)nonadecanoyl-[(phenol)carboxyphthiodiolenone synthase] + 2 (S)-methylmalonyl-CoA + 3 malonyl-CoA + 5 NADPH + 10 H(+) = C37-(phenol)carboxyphthiodiolenone-[(phenol)carboxyphthiodiolenone synthase] + 5 CO2 + 5 NADP(+) + 5 CoA + 2 H2O. The protein operates within lipid metabolism; fatty acid biosynthesis. Its function is as follows. Part of the PpsABCDE complex involved in the biosynthesis of the lipid core common to phthiocerols and phenolphthiocerols by successive additions of malonyl-CoA or methylmalonyl-CoA extender units. PpsA can accept as substrate the activated forms of either icosanoyl (C20), docosanoyl (C22) or lignoceroyl (C24) groups from FadD26, or a (4-hydroxyphenyl)-C17 or (4-hydroxyphenyl)-C19 fatty acyl from FadD29. PpsA initiates the biosynthesis and extends its substrate using a malonyl-CoA extender unit. The PpsB and PpsC proteins add the second and third malonyl-CoA extender units. PpsD adds an (R)-methylmalonyl unit and PpsE adds a second (R)-methylmalonyl unit. The incorporation of the methylmalonyl units results in formation of two branched methyl groups in the elongated product. The sequence is that of Phenolphthiocerol/phthiocerol polyketide synthase subunit C (ppsD) from Mycobacterium bovis (strain ATCC BAA-935 / AF2122/97).